We begin with the raw amino-acid sequence, 150 residues long: U1 small nuclear ribonucleoprotein C (150 aa).

Residues 4 to 36 (YYCDYCKSYLTHDTMSVRKSHLQGRNHIKFYCD) form a Matrin-type zinc finger. The disordered stretch occupies residues 66-132 (SDAKKSNGSS…GLPLPPPAVY (67 aa)). Basic and acidic residues predominate over residues 80–92 (DIDKKENSSDHNK). Residues 103 to 112 (NDNDDDDDEM) are compositionally biased toward acidic residues. Positions 115 to 130 (LPPPPNLSGLPLPPPA) are enriched in pro residues.

This sequence belongs to the U1 small nuclear ribonucleoprotein C family. In terms of assembly, U1 snRNP is composed of the 7 core Sm proteins B/B', D1, D2, D3, E, F and G that assemble in a heptameric protein ring on the Sm site of the small nuclear RNA to form the core snRNP, and at least 3 U1 snRNP-specific proteins U1-70K, U1-A and U1-C. U1-C interacts with U1 snRNA and the 5' splice-site region of the pre-mRNA.

It localises to the nucleus. Its function is as follows. Component of the spliceosomal U1 snRNP, which is essential for recognition of the pre-mRNA 5' splice-site and the subsequent assembly of the spliceosome. U1-C is directly involved in initial 5' splice-site recognition for both constitutive and regulated alternative splicing. The interaction with the 5' splice-site seems to precede base-pairing between the pre-mRNA and the U1 snRNA. Stimulates commitment or early (E) complex formation by stabilizing the base pairing of the 5' end of the U1 snRNA and the 5' splice-site region. The chain is U1 small nuclear ribonucleoprotein C from Candida albicans (strain SC5314 / ATCC MYA-2876) (Yeast).